We begin with the raw amino-acid sequence, 448 residues long: Tubulin alpha chain, nucleomorph (448 aa).

Residues Gln11, Glu71, Ser140, Gly144, Thr145, Thr179, Asn206, and Asn228 each contribute to the GTP site. Residue Glu71 participates in Mg(2+) binding. Glu254 is a catalytic residue.

Belongs to the tubulin family. In terms of assembly, dimer of alpha and beta chains. A typical microtubule is a hollow water-filled tube with an outer diameter of 25 nm and an inner diameter of 15 nM. Alpha-beta heterodimers associate head-to-tail to form protofilaments running lengthwise along the microtubule wall with the beta-tubulin subunit facing the microtubule plus end conferring a structural polarity. Microtubules usually have 13 protofilaments but different protofilament numbers can be found in some organisms and specialized cells. Requires Mg(2+) as cofactor.

It catalyses the reaction GTP + H2O = GDP + phosphate + H(+). Its function is as follows. Tubulin is the major constituent of microtubules, a cylinder consisting of laterally associated linear protofilaments composed of alpha- and beta-tubulin heterodimers. Microtubules grow by the addition of GTP-tubulin dimers to the microtubule end, where a stabilizing cap forms. Below the cap, tubulin dimers are in GDP-bound state, owing to GTPase activity of alpha-tubulin. The chain is Tubulin alpha chain, nucleomorph (tubA) from Guillardia theta (Cryptophyte).